The following is a 159-amino-acid chain: MCENEKERTLVIIKPDAVIRGLIGEIISRFEKRGLKIVGMKMIWISKELAEKHYAEHREKPFFKSLVEYITRTPVVVMVVEGRCAIEVVRKMAGATDPKNAEPGTIRGDFALEVSDAICNVVHASDSKESAEREIKLYFRDDEIFDYPRAEDWFYRKGI.

Residues Lys14, Phe62, Arg90, Thr96, and Arg107 each coordinate ATP. His123 serves as the catalytic Pros-phosphohistidine intermediate.

This sequence belongs to the NDK family. The cofactor is Mg(2+).

It is found in the cytoplasm. The enzyme catalyses a 2'-deoxyribonucleoside 5'-diphosphate + ATP = a 2'-deoxyribonucleoside 5'-triphosphate + ADP. It carries out the reaction a ribonucleoside 5'-diphosphate + ATP = a ribonucleoside 5'-triphosphate + ADP. Its function is as follows. Major role in the synthesis of nucleoside triphosphates other than ATP. The ATP gamma phosphate is transferred to the NDP beta phosphate via a ping-pong mechanism, using a phosphorylated active-site intermediate. In Pyrococcus abyssi (strain GE5 / Orsay), this protein is Nucleoside diphosphate kinase.